Reading from the N-terminus, the 88-residue chain is UPF0250 protein Shewmr4_0986 (88 aa).

This sequence belongs to the UPF0250 family.

This Shewanella sp. (strain MR-4) protein is UPF0250 protein Shewmr4_0986.